The chain runs to 612 residues: MSSFNSNSNPANAQNLSSFQFQPPKEDVIFDTHQMSLSVPQSRYYASSMMQQSQQGQPQSQTSQQQQQQPFLMNIPPAFTQTQPQQMLYAMPPLQTQQPSSSSATTNNVVPPHHYNQQQSQQQQQQQQQYQQMQPQPNNMQFFDNTIPNYLIMNQTISPSQTQTTAQPNISYYNYSTQPQLQSAQPISHSQPQPQPQATQPRSNRSRSQTSFSKPRGSRQVSGSGRSTGAKKQSAITSGSTGTGPARNADTGMTSVANSTSTTTMTTTNNNNKLSVSAPVNVIYANLPERLQQVLPAPPLSRAPVRPDVTVNLTSKRAKRKSKFTPEQDDMIVNLKKKGKSWVEIAEITGVGSYLAARNRFQVIVGQQGNNNSSAWDNTDKLFLNQLLDAGEIEKWRFICCELNKSTNKNFTDYECREMIRQLFWLNPASFGVNEETIIESQKEKKLTEKTIEQREQQRKKRASANHSPPDSDSITNTNNNQQEVKYIDPQYKNYQSQLMPNQNTGSGATKISSTTPPPPSQALSNNVNTMNKNIVSSALGGTSFSQEQHSLHSNQHHHNHQQHPLIHHHQYQQQSSLPPPPTIPSTIPTSSLSIQQQQQQQQQQLYNKQFY.

Composition is skewed to low complexity over residues 1-18, 47-68, 94-106, 115-141, 182-203, and 218-228; these read MSSFNSNSNPANAQNLSS, SSMMQQSQQGQPQSQTSQQQQQ, LQTQQPSSSSATT, YNQQQSQQQQQQQQQYQQMQPQPNNMQ, QSAQPISHSQPQPQPQATQPRS, and SRQVSGSGRST. Disordered regions lie at residues 1 to 20, 46 to 68, 94 to 143, 179 to 273, 443 to 480, 497 to 527, and 546 to 612; these read MSSFNSNSNPANAQNLSSFQ, ASSMMQQSQQGQPQSQTSQQQQQ, LQTQ…MQFF, PQLQ…NNNK, KEKKLTEKTIEQREQQRKKRASANHSPPDSDSITNTNN, SQLMPNQNTGSGATKISSTTPPPPSQALSNN, and SQEQ…KQFY. The segment covering 230 to 240 has biased composition (polar residues); it reads AKKQSAITSGS. Residues 254-272 are compositionally biased toward low complexity; sequence TSVANSTSTTTMTTTNNNN. Residues 443–457 are compositionally biased toward basic and acidic residues; the sequence is KEKKLTEKTIEQREQ. 2 stretches are compositionally biased toward polar residues: residues 465–480 and 497–512; these read ANHSPPDSDSITNTNN and SQLMPNQNTGSGATKI. Residues 555 to 571 show a composition bias toward basic residues; it reads NQHHHNHQQHPLIHHHQ. The span at 585–606 shows a compositional bias: low complexity; it reads PSTIPTSSLSIQQQQQQQQQQL.

Its function is as follows. Surface antigen mediating adhesion and aggregation in S.cerevisiae. This Candida albicans (strain SC5314 / ATCC MYA-2876) (Yeast) protein is Adherence factor (ADF1).